Consider the following 919-residue polypeptide: Valine--tRNA ligase (919 aa).

The 'HIGH' region motif lies at 46–56; it reads PNVTGTLHMGH. Positions 528 to 532 match the 'KMSKS' region motif; sequence KMSKS. Lys531 is an ATP binding site. The stretch at 849 to 919 forms a coiled coil; it reads LAGLVDIEAE…KTLEKKEALG (71 aa).

This sequence belongs to the class-I aminoacyl-tRNA synthetase family. ValS type 1 subfamily. As to quaternary structure, monomer.

It is found in the cytoplasm. The enzyme catalyses tRNA(Val) + L-valine + ATP = L-valyl-tRNA(Val) + AMP + diphosphate. Functionally, catalyzes the attachment of valine to tRNA(Val). As ValRS can inadvertently accommodate and process structurally similar amino acids such as threonine, to avoid such errors, it has a 'posttransfer' editing activity that hydrolyzes mischarged Thr-tRNA(Val) in a tRNA-dependent manner. The polypeptide is Valine--tRNA ligase (Francisella tularensis subsp. tularensis (strain SCHU S4 / Schu 4)).